We begin with the raw amino-acid sequence, 267 residues long: Exopolysaccharide production negative regulator (267 aa).

Residues 1–23 (MVTSEFKLFKFMLMGMSIAVALA) form the signal peptide.

Negatively modulates exopolysaccharide (EPS) biosynthesis. The protein is Exopolysaccharide production negative regulator (exoR) of Rhizobium leguminosarum bv. viciae.